Reading from the N-terminus, the 79-residue chain is Conotoxin ArMSGL-0123 (79 aa).

The first 20 residues, 1–20 (MSRLGIMVLTLLLLVFIVTS), serve as a signal peptide directing secretion. Residues 21 to 44 (HQDAGEKQATKRAAVNFRWRRSFT) constitute a propeptide that is removed on maturation. Cystine bridges form between Cys52-Cys64, Cys56-Cys73, and Cys63-Cys77. Leu78 is modified (leucine amide).

This sequence belongs to the conotoxin O3 superfamily. In terms of tissue distribution, expressed by the venom duct.

Its subcellular location is the secreted. The sequence is that of Conotoxin ArMSGL-0123 from Conus arenatus (Sand-dusted cone).